Consider the following 345-residue polypeptide: N-acetyl-gamma-glutamyl-phosphate reductase (345 aa).

Cysteine 149 is an active-site residue.

This sequence belongs to the NAGSA dehydrogenase family. Type 1 subfamily.

The protein localises to the cytoplasm. The enzyme catalyses N-acetyl-L-glutamate 5-semialdehyde + phosphate + NADP(+) = N-acetyl-L-glutamyl 5-phosphate + NADPH + H(+). It participates in amino-acid biosynthesis; L-arginine biosynthesis; N(2)-acetyl-L-ornithine from L-glutamate: step 3/4. Its function is as follows. Catalyzes the NADPH-dependent reduction of N-acetyl-5-glutamyl phosphate to yield N-acetyl-L-glutamate 5-semialdehyde. This is N-acetyl-gamma-glutamyl-phosphate reductase from Geobacillus stearothermophilus (Bacillus stearothermophilus).